A 531-amino-acid polypeptide reads, in one-letter code: NADH-quinone oxidoreductase subunit N (531 aa).

Transmembrane regions (helical) follow at residues 8 to 28, 41 to 61, 81 to 101, 146 to 166, 172 to 192, 208 to 228, 250 to 270, 282 to 302, 318 to 338, 350 to 370, 372 to 392, 418 to 438, 453 to 473, and 500 to 520; these read VEYF…AGVL, AQVT…IVVA, ATLF…VFMA, GATQ…MMVF, LLTM…MCGL, FLLG…LYGA, ALAG…AVPF, PTPI…GALL, PVLW…AVNQ, VAHV…GLSA, LFYL…VGLV, IVGV…LTSG, GAVP…YFYV, and AAIA…QPVL.

The protein belongs to the complex I subunit 2 family. In terms of assembly, NDH-1 is composed of 14 different subunits. Subunits NuoA, H, J, K, L, M, N constitute the membrane sector of the complex.

The protein localises to the cell membrane. The enzyme catalyses a quinone + NADH + 5 H(+)(in) = a quinol + NAD(+) + 4 H(+)(out). In terms of biological role, NDH-1 shuttles electrons from NADH, via FMN and iron-sulfur (Fe-S) centers, to quinones in the respiratory chain. The immediate electron acceptor for the enzyme in this species is believed to be a menaquinone. Couples the redox reaction to proton translocation (for every two electrons transferred, four hydrogen ions are translocated across the cytoplasmic membrane), and thus conserves the redox energy in a proton gradient. The protein is NADH-quinone oxidoreductase subunit N of Mycobacterium bovis (strain ATCC BAA-935 / AF2122/97).